A 455-amino-acid chain; its full sequence is Dihydrolipoyllysine-residue succinyltransferase component of 2-oxoglutarate dehydrogenase complex, mitochondrial (455 aa).

The transit peptide at 1 to 68 directs the protein to the mitochondrion; sequence MLSRSRCVSR…RFFRTTAVCK (68 aa). Residues 71–145 form the Lipoyl-binding domain; sequence VITVKTPAFA…EGGTPLFTLR (75 aa). The residue at position 82 (Ser82) is a Phosphoserine. At Lys111 the chain carries N6-lipoyllysine. Residues 153-173 are compositionally biased toward low complexity; that stretch reads KAKPAEAPAAAAPKAEPAVSA. The disordered stretch occupies residues 153–214; the sequence is KAKPAEAPAA…KPTAAPPVAE (62 aa). Residue Lys155 is modified to N6-acetyllysine. The span at 174–195 shows a compositional bias: pro residues; it reads VPPPPAASIPTQMPPVPSPPQP. Positions 221–453 are catalytic; sequence LRAEHREKMN…AVEDPRVLLL (233 aa). Residues Lys269, Lys274, Lys275, Lys279, and Lys309 each carry the N6-acetyllysine modification. Residues His426 and Asp430 contribute to the active site.

This sequence belongs to the 2-oxoacid dehydrogenase family. In terms of assembly, the 2-oxoglutarate dehydrogenase complex is composed of OGDH (2-oxoglutarate dehydrogenase; E1), DLST (dihydrolipoamide succinyltransferase; E2), DLD (dihydrolipoamide dehydrogenase; E3) and the assembly factor KGD4. It contains multiple copies of the three enzymatic components (E1, E2 and E3). In the nucleus, the 2-oxoglutarate dehydrogenase complex associates with KAT2A. Interacts with ABHD11; this interaction maintains the functional lipoylation of the 2-oxoglutarate dehydrogenase complex. It depends on (R)-lipoate as a cofactor.

It is found in the mitochondrion matrix. Its subcellular location is the nucleus. It carries out the reaction N(6)-[(R)-dihydrolipoyl]-L-lysyl-[protein] + succinyl-CoA = N(6)-[(R)-S(8)-succinyldihydrolipoyl]-L-lysyl-[protein] + CoA. Its pathway is amino-acid degradation; L-lysine degradation via saccharopine pathway; glutaryl-CoA from L-lysine: step 6/6. It functions in the pathway carbohydrate metabolism; tricarboxylic acid cycle. Functionally, dihydrolipoamide succinyltransferase (E2) component of the 2-oxoglutarate dehydrogenase complex. The 2-oxoglutarate dehydrogenase complex catalyzes the overall conversion of 2-oxoglutarate to succinyl-CoA and CO(2). The 2-oxoglutarate dehydrogenase complex is mainly active in the mitochondrion. A fraction of the 2-oxoglutarate dehydrogenase complex also localizes in the nucleus and is required for lysine succinylation of histones: associates with KAT2A on chromatin and provides succinyl-CoA to histone succinyltransferase KAT2A. The polypeptide is Dihydrolipoyllysine-residue succinyltransferase component of 2-oxoglutarate dehydrogenase complex, mitochondrial (Sus scrofa (Pig)).